The chain runs to 340 residues: Nesprin-4 (340 aa).

2 disordered regions span residues 1 to 86 and 254 to 277; these read MAQF…DGGK and HRRR…DAML. Over 1–291 the chain is Cytoplasmic; the sequence is MAQFPLLGHG…GVPAPASRRP (291 aa). Residues 53–63 are compositionally biased toward basic and acidic residues; the sequence is APEHFMDEPKS. One can recognise a KASH domain in the interval 283 to 340; it reads VPAPASRRPLTFLLLLLFLLLVGATLLLPLSGVPCCSHTRLARTPYLVLSYVNGLPPI. A helical; Anchor for type IV membrane protein transmembrane segment spans residues 292–312; the sequence is LTFLLLLLFLLLVGATLLLPL. Topologically, residues 313–340 are perinuclear space; it reads SGVPCCSHTRLARTPYLVLSYVNGLPPI.

This sequence belongs to the nesprin family. As to quaternary structure, core component of LINC complexes which are composed of inner nuclear membrane SUN domain-containing proteins coupled to outer nuclear membrane KASH domain-containing nesprins. SUN and KASH domain-containing proteins seem to bind each other promiscuously; however, differentially expression of LINC complex constituents can give rise to specific assemblies. Probably part of a SUN1-containing LINC complex. Interacts with kinesins KIF5B and KLC1.

It localises to the nucleus outer membrane. As a component of the LINC (LInker of Nucleoskeleton and Cytoskeleton) complex, involved in the connection between the nuclear lamina and the cytoskeleton. The nucleocytoplasmic interactions established by the LINC complex play an important role in the transmission of mechanical forces across the nuclear envelope and in nuclear movement and positioning. Behaves as a kinesin cargo, providing a functional binding site for kinesin-1 at the nuclear envelope. Hence may contribute to the establishment of secretory epithelial morphology, by promoting kinesin-dependent apical migration of the centrosome and Golgi apparatus and basal localization of the nucleus. This Rattus norvegicus (Rat) protein is Nesprin-4 (Syne4).